Here is a 106-residue protein sequence, read N- to C-terminus: Probable insulin-like peptide beta-type 1 (106 aa).

The signal sequence occupies residues 1–19 (MFSFFTYFLLSALLLSASC). Residues 20-51 (RQPSMDTSKADRILREIEMETELENQLSRARR) constitute a propeptide, removed; by convertase egl-3. Cystine bridges form between Cys60–Cys89, Cys72–Cys102, Cys76–Cys103, and Cys88–Cys93.

This sequence belongs to the insulin family. Expressed by ASI and ASJ sensory neurons and weakly by ventral cord motor neurons.

The protein resides in the secreted. Functionally, probable insulin-like peptide which negatively regulates synapse development at the neuromuscular junctions. Probably acts as a daf-2/InsR agonist ligand to prevent dauer formation under optimal environmental conditions. The chain is Probable insulin-like peptide beta-type 1 (ins-4) from Caenorhabditis elegans.